The following is a 177-amino-acid chain: uncharacterized protein (177 aa).

The region spanning 10-177 (LILRQITDQD…NVYSIVKPRE (168 aa)) is the N-acetyltransferase domain.

Belongs to the acetyltransferase family.

This is an uncharacterized protein from Bacillus subtilis (strain 168).